Reading from the N-terminus, the 308-residue chain is Glucan 1,3-beta-glucosidase BGL2 (308 aa).

Residues 1–18 form the signal peptide; that stretch reads MQIKFLTTLATVLTSVAA. The Proton donor role is filled by Glu-119. Asn-197 is a glycosylation site (N-linked (GlcNAc...) asparagine). The Nucleophile role is filled by Glu-228.

It belongs to the glycosyl hydrolase 17 family.

It is found in the secreted. The protein resides in the cell wall. The protein localises to the cytoplasm. It carries out the reaction Successive hydrolysis of beta-D-glucose units from the non-reducing ends of (1-&gt;3)-beta-D-glucans, releasing alpha-glucose.. Functionally, cell wall glucan 1,3-beta-glucosidase involved in cell wall biosynthesis and virulence. Crucial for delivery of beta-1,3-glucan to the biofilm matrix and for accumulation of mature matrix biomass. Plays a role as a major antigen in human systemic candidiasis patients. This is Glucan 1,3-beta-glucosidase BGL2 (BGL2) from Candida albicans (strain SC5314 / ATCC MYA-2876) (Yeast).